A 439-amino-acid chain; its full sequence is Enolase (439 aa).

2 residues coordinate substrate: H160 and E169. The active-site Proton donor is E212. D247, E296, and D323 together coordinate Mg(2+). Substrate is bound by residues E296 and D323. K348 acts as the Proton acceptor in catalysis. Substrate-binding positions include 375-378 (SHRS) and K399.

This sequence belongs to the enolase family. In terms of assembly, homodimer. It depends on Mg(2+) as a cofactor.

Its subcellular location is the cytoplasm. The enzyme catalyses (2R)-2-phosphoglycerate = phosphoenolpyruvate + H2O. It participates in carbohydrate degradation; glycolysis; pyruvate from D-glyceraldehyde 3-phosphate: step 4/5. This chain is Enolase (ENO), found in Rhodotorula mucilaginosa (Yeast).